The primary structure comprises 366 residues: tRNA/tmRNA (uracil-C(5))-methyltransferase (366 aa).

The S-adenosyl-L-methionine site is built by Gln-190, Tyr-218, Asn-223, Glu-239, and Asp-299. The Nucleophile role is filled by Cys-324. The active-site Proton acceptor is Glu-358.

Belongs to the class I-like SAM-binding methyltransferase superfamily. RNA M5U methyltransferase family. TrmA subfamily.

The catalysed reaction is uridine(54) in tRNA + S-adenosyl-L-methionine = 5-methyluridine(54) in tRNA + S-adenosyl-L-homocysteine + H(+). The enzyme catalyses uridine(341) in tmRNA + S-adenosyl-L-methionine = 5-methyluridine(341) in tmRNA + S-adenosyl-L-homocysteine + H(+). Dual-specificity methyltransferase that catalyzes the formation of 5-methyluridine at position 54 (m5U54) in all tRNAs, and that of position 341 (m5U341) in tmRNA (transfer-mRNA). The protein is tRNA/tmRNA (uracil-C(5))-methyltransferase of Cellvibrio japonicus (strain Ueda107) (Pseudomonas fluorescens subsp. cellulosa).